Here is a 274-residue protein sequence, read N- to C-terminus: Pyrroline-5-carboxylate reductase 3 (274 aa).

The residue at position 2 (A2) is an N-acetylalanine.

This sequence belongs to the pyrroline-5-carboxylate reductase family. As to quaternary structure, homodecamer; composed of 5 homodimers.

The protein resides in the cytoplasm. It catalyses the reaction L-proline + NADP(+) = (S)-1-pyrroline-5-carboxylate + NADPH + 2 H(+). The catalysed reaction is L-proline + NAD(+) = (S)-1-pyrroline-5-carboxylate + NADH + 2 H(+). It participates in amino-acid biosynthesis; L-proline biosynthesis; L-proline from L-glutamate 5-semialdehyde: step 1/1. Functionally, oxidoreductase that catalyzes the last step in proline biosynthesis, which corresponds to the reduction of pyrroline-5-carboxylate (P5C) to L-proline using NAD(P)H. Proline is synthesized from either glutamate or ornithine; both are converted to P5C, and then to proline via pyrroline-5-carboxylate reductases (PYCRs). PYCR3 is exclusively linked to the biosynthesis of proline from ornithine. This is Pyrroline-5-carboxylate reductase 3 from Macaca fascicularis (Crab-eating macaque).